The following is a 151-amino-acid chain: Caveolin-3 (151 aa).

At 1–83 (MMAEERTDLE…RLLSTLLGVP (83 aa)) the chain is on the cytoplasmic side. K38 is covalently cross-linked (Glycyl lysine isopeptide (Lys-Gly) (interchain with G-Cter in SUMO3)). A required for interaction with DAG1 region spans residues 64–114 (TFTVSKYWCYRLLSTLLGVPLALLWGFLFACISFCHIWAVVPCIKSYLIEI). Positions 84-104 (LALLWGFLFACISFCHIWAVV) form an intramembrane region, helical. The Cytoplasmic segment spans residues 105 to 151 (PCIKSYLIEIQCISHIYSLCIRTFCNPVFAALGQVCSNIKVMLRKEV).

Belongs to the caveolin family. In terms of assembly, homooligomer. Interacts with DYSF. Interacts with DLG1 and KCNA5; forms a ternary complex. Interacts with DAG1 (via its C-terminal); the interaction prevents binding of DAG1 with DMD. Interacts with TRIM72. Interacts with MUSK; may regulate MUSK signaling. Interacts with POPDC1. Interacts with CAVIN1, CAVIN2 and CAVIN4. Post-translationally, sumoylation with SUMO3 by PIAS4 may reduce agonist-induced internalization and desensitization of adrenergic receptor ABRD2. In terms of tissue distribution, expressed specifically in skeletal muscle and heart.

The protein resides in the golgi apparatus membrane. It localises to the cell membrane. It is found in the membrane. Its subcellular location is the caveola. The protein localises to the sarcolemma. Its function is as follows. May act as a scaffolding protein within caveolar membranes. Interacts directly with G-protein alpha subunits and can functionally regulate their activity. May also regulate voltage-gated potassium channels. Plays a role in the sarcolemma repair mechanism of both skeletal muscle and cardiomyocytes that permits rapid resealing of membranes disrupted by mechanical stress. Mediates the recruitment of CAVIN2 and CAVIN3 proteins to the caveolae. The polypeptide is Caveolin-3 (CAV3) (Sus scrofa (Pig)).